The primary structure comprises 942 residues: Inter alpha-trypsin inhibitor, heavy chain 4 (942 aa).

The N-terminal stretch at 1–28 is a signal peptide; the sequence is MKSPAPAHMWNLVLFLPSLLAVLPTTTA. One can recognise a VIT domain in the interval 29 to 148; the sequence is EKNGIDIYSL…KITFELIYQE (120 aa). Asn-81 carries an N-linked (GlcNAc...) asparagine glycan. Residues 274–457 enclose the VWFA domain; it reads NVIFVIDKSG…LQLQDFYHEV (184 aa). N-linked (GlcNAc...) asparagine glycans are attached at residues Asn-517 and Asn-577. Residues 552 to 586 adopt a coiled-coil conformation; it reads TIQQQLEQRISASGAELEALEAQVLNLSLKYNFVT. 2 disordered regions span residues 658 to 698 and 726 to 745; these read RQYI…SDFS and EKSKESTIPEESPNPDHPQV. The segment covering 663-690 has biased composition (pro residues); that stretch reads PGFPGPPGPPGFPAPPGPPGFPAPPGPP. O-linked (GalNAc...) threonine glycosylation is present at Thr-732. Cys-761 and Cys-937 are oxidised to a cystine. A glycan (N-linked (GlcNAc...) asparagine) is linked at Asn-874.

Belongs to the ITIH family. Interacts (via C-terminus) with DNAJC1 (via SANT 2 domain). Post-translationally, may be O-glycosylated. N-glycosylated. Highly expressed in liver. Weak expression in lung and heart.

The protein resides in the secreted. In terms of biological role, type II acute-phase protein (APP) involved in inflammatory responses to trauma. May also play a role in liver development or regeneration. The polypeptide is Inter alpha-trypsin inhibitor, heavy chain 4 (Itih4) (Mus musculus (Mouse)).